The primary structure comprises 483 residues: MEFGDGVSFAVVPTVFKREDYKRTKHDTVFSKWQVLIGSNDWEDFKNGKDGVGRYRVQNLPRKSCPGLYELGVAVIGQEQCRKLEPDIVLASYLGQAESVRSRLQRYGRSGAHLRNVNNLNDCETIESPVKAVTGGLFEDIFSKGGSILYRWAPMGSKREAEATEGMLLSTFDYAWNKGSNGERRQLDLLKKLGDREFMSKRKSGISRMLFPFLRNQVGIRIKGEKHVLKEERKLTCDVDEEKSNNFLTSILKLTRSRPQPVSDRFDEVDGSCSDIVCGVLLEDGGCCIRSPVKGRKRCIEHKGQRVCRVSPEKQTPPKSEIFTGQDHHNHKDSDVVCGVILPDMEPCNKRPVPGRKRCEDHKGMRINAFLFLLNQTDREKTVKDEKPDPESHTESIEEEALTRFCEATTKNGLPCTRSSPKGSKRCWQHKEKTSSDTSPVYFQPEAAKNVACGVKLGNGLICERSPVKGRKRCEEHKGMRIT.

The GIY-YIG domain occupies 64–112 (SCPGLYELGVAVIGQEQCRKLEPDIVLASYLGQAESVRSRLQRYGRSGA). 2 Cx9Cx9RCx2HK repeats span residues 278-303 (CGVL…IEHK) and 338-363 (CGVI…EDHK). Over residues 380 to 396 (EKTVKDEKPDPESHTES) the composition is skewed to basic and acidic residues. Residues 380-399 (EKTVKDEKPDPESHTESIEE) are disordered. Cx9Cx9RCx2HK repeat units lie at residues 406–431 (CEAT…WQHK) and 453–478 (CGVK…EEHK).

In terms of tissue distribution, expressed in vascular tissues of stems, hypocotyls, leaves and flowers. Expressed in the vascular bundles of xylem in shoot parenchyma cells. Expressed in the remnant cytoplasm of differentiated fiber cells and in protoxylem element of parenchymal cells.

It is found in the cytoplasm. The protein localises to the nucleus. Functionally, transcriptional regulator involved in the regulation of cell differentiation in meristems. Probably regulates the expression of various KNAT genes involved in the maintenance of the cells in an undifferentiated, merismastic state. Plays a role in the regulation of gibberellin 20 oxidase and the gibberellin-regulated protein GASA4. Localizes in the nucleus during the cellular differentiation state and may act via a single strand cutting domain. Transcriptional regulator required for the induction of dormancy during late seed development. Interacts genetically with FUS3 and may be component of the same regulatory pathway during embryogenesis. Binds both linear and supercoiled DNA without sequence preference. The chain is Protein EFFECTOR OF TRANSCRIPTION 2 from Arabidopsis thaliana (Mouse-ear cress).